A 473-amino-acid polypeptide reads, in one-letter code: Cysteine--tRNA ligase (473 aa).

Zn(2+) is bound at residue Cys30. A 'HIGH' region motif is present at residues 32–42; that stretch reads MTVYDYCHIGH. Zn(2+) is bound by residues Cys213, His238, and Glu242. The 'KMSKS' region signature appears at 270–274; it reads KMSKS. ATP is bound at residue Lys273.

The protein belongs to the class-I aminoacyl-tRNA synthetase family. Monomer. The cofactor is Zn(2+).

It localises to the cytoplasm. It carries out the reaction tRNA(Cys) + L-cysteine + ATP = L-cysteinyl-tRNA(Cys) + AMP + diphosphate. The protein is Cysteine--tRNA ligase of Acinetobacter baumannii (strain SDF).